The chain runs to 208 residues: dITP/XTP pyrophosphatase (208 aa).

Position 7 to 12 (7 to 12 (SNNAKK)) interacts with substrate. Mg(2+) is bound by residues Glu39 and Asp68. Residue Asp68 is the Proton acceptor of the active site. Substrate-binding positions include Ser69, 162 to 165 (FGYD), Lys185, and 190 to 191 (HR).

This sequence belongs to the HAM1 NTPase family. As to quaternary structure, homodimer. Mg(2+) is required as a cofactor.

It catalyses the reaction XTP + H2O = XMP + diphosphate + H(+). The catalysed reaction is dITP + H2O = dIMP + diphosphate + H(+). The enzyme catalyses ITP + H2O = IMP + diphosphate + H(+). Its function is as follows. Pyrophosphatase that catalyzes the hydrolysis of nucleoside triphosphates to their monophosphate derivatives, with a high preference for the non-canonical purine nucleotides XTP (xanthosine triphosphate), dITP (deoxyinosine triphosphate) and ITP. Seems to function as a house-cleaning enzyme that removes non-canonical purine nucleotides from the nucleotide pool, thus preventing their incorporation into DNA/RNA and avoiding chromosomal lesions. The chain is dITP/XTP pyrophosphatase from Methylibium petroleiphilum (strain ATCC BAA-1232 / LMG 22953 / PM1).